Reading from the N-terminus, the 435-residue chain is Xylose isomerase (435 aa).

2 residues coordinate Mg(2+): Asp-306 and Asp-308.

This sequence belongs to the xylose isomerase family. Homotetramer. It depends on Mg(2+) as a cofactor.

Its subcellular location is the cytoplasm. It catalyses the reaction alpha-D-xylose = alpha-D-xylulofuranose. This is Xylose isomerase from Allorhizobium ampelinum (strain ATCC BAA-846 / DSM 112012 / S4) (Agrobacterium vitis (strain S4)).